The sequence spans 297 residues: 33 kDa chaperonin (297 aa).

2 disulfide bridges follow: C233–C235 and C267–C270.

The protein belongs to the HSP33 family. Post-translationally, under oxidizing conditions two disulfide bonds are formed involving the reactive cysteines. Under reducing conditions zinc is bound to the reactive cysteines and the protein is inactive.

The protein resides in the cytoplasm. Functionally, redox regulated molecular chaperone. Protects both thermally unfolding and oxidatively damaged proteins from irreversible aggregation. Plays an important role in the bacterial defense system toward oxidative stress. The sequence is that of 33 kDa chaperonin from Haemophilus ducreyi (strain 35000HP / ATCC 700724).